Here is a 560-residue protein sequence, read N- to C-terminus: Dihydroxy-acid dehydratase (560 aa).

Cys-52 provides a ligand contact to [2Fe-2S] cluster. Asp-84 contributes to the Mg(2+) binding site. Cys-125 serves as a coordination point for [2Fe-2S] cluster. 2 residues coordinate Mg(2+): Asp-126 and Lys-127. Lys-127 is subject to N6-carboxylysine. Cys-197 contacts [2Fe-2S] cluster. Glu-448 contacts Mg(2+). Ser-474 acts as the Proton acceptor in catalysis.

The protein belongs to the IlvD/Edd family. In terms of assembly, homodimer. The cofactor is [2Fe-2S] cluster. Mg(2+) is required as a cofactor.

It catalyses the reaction (2R)-2,3-dihydroxy-3-methylbutanoate = 3-methyl-2-oxobutanoate + H2O. The catalysed reaction is (2R,3R)-2,3-dihydroxy-3-methylpentanoate = (S)-3-methyl-2-oxopentanoate + H2O. Its pathway is amino-acid biosynthesis; L-isoleucine biosynthesis; L-isoleucine from 2-oxobutanoate: step 3/4. It functions in the pathway amino-acid biosynthesis; L-valine biosynthesis; L-valine from pyruvate: step 3/4. Functions in the biosynthesis of branched-chain amino acids. Catalyzes the dehydration of (2R,3R)-2,3-dihydroxy-3-methylpentanoate (2,3-dihydroxy-3-methylvalerate) into 2-oxo-3-methylpentanoate (2-oxo-3-methylvalerate) and of (2R)-2,3-dihydroxy-3-methylbutanoate (2,3-dihydroxyisovalerate) into 2-oxo-3-methylbutanoate (2-oxoisovalerate), the penultimate precursor to L-isoleucine and L-valine, respectively. In Francisella tularensis subsp. novicida (strain U112), this protein is Dihydroxy-acid dehydratase.